Consider the following 67-residue polypeptide: Conotoxin Lt5.9 (67 aa).

Residues 1–19 form the signal peptide; the sequence is MLCLPVFIILLLLASPAAP. Positions 20–46 are excised as a propeptide; sequence KSFETKVQSDLTRTDGNMETEENLGEV.

It belongs to the conotoxin T superfamily. Post-translationally, contains 2 disulfide bonds that can be either 'C1-C3, C2-C4' or 'C1-C4, C2-C3', since these disulfide connectivities have been observed for conotoxins with cysteine framework V (for examples, see AC P0DQQ7 and AC P81755). Expressed by the venom duct.

It is found in the secreted. The sequence is that of Conotoxin Lt5.9 from Conus litteratus (Lettered cone).